Reading from the N-terminus, the 92-residue chain is Large ribosomal subunit protein eL43 (92 aa).

A C4-type zinc finger spans residues 39–60 (CDFCGKYGMKRQAVGIWCCKGC).

Belongs to the eukaryotic ribosomal protein eL43 family.

This chain is Large ribosomal subunit protein eL43 (RPL37a), found in Ostreococcus tauri.